Consider the following 437-residue polypeptide: Glutamyl-tRNA reductase (437 aa).

Residues 49–52 (TCNR), Ser109, 114–116 (ETQ), and Gln120 contribute to the substrate site. Residue Cys50 is the Nucleophile of the active site. Residue 189–194 (GAGEMS) coordinates NADP(+).

The protein belongs to the glutamyl-tRNA reductase family. As to quaternary structure, homodimer.

The catalysed reaction is (S)-4-amino-5-oxopentanoate + tRNA(Glu) + NADP(+) = L-glutamyl-tRNA(Glu) + NADPH + H(+). It participates in porphyrin-containing compound metabolism; protoporphyrin-IX biosynthesis; 5-aminolevulinate from L-glutamyl-tRNA(Glu): step 1/2. Its function is as follows. Catalyzes the NADPH-dependent reduction of glutamyl-tRNA(Glu) to glutamate 1-semialdehyde (GSA). This chain is Glutamyl-tRNA reductase, found in Listeria welshimeri serovar 6b (strain ATCC 35897 / DSM 20650 / CCUG 15529 / CIP 8149 / NCTC 11857 / SLCC 5334 / V8).